We begin with the raw amino-acid sequence, 1033 residues long: E3 ubiquitin-protein ligase Topors (1033 aa).

The span at 1–10 (MGSQPPPPGS) shows a compositional bias: pro residues. A disordered region spans residues 1 to 36 (MGSQPPPPGSPLSREEGEAPPLVPAEEGRRRSRRVR). The segment at 52–376 (ELASNGPAVP…MAAFDQHANY (325 aa)) is required for DNA-binding. Glycyl lysine isopeptide (Lys-Gly) (interchain with G-Cter in SUMO2) cross-links involve residues K74, K77, K84, and K89. S99 is modified (phosphoserine). An RING-type zinc finger spans residues 104-143 (CPICLDRFDNVSYLDRCLHKFCFRCVQEWSKNKAECPLCK). K160 is covalently cross-linked (Glycyl lysine isopeptide (Lys-Gly) (interchain with G-Cter in SUMO2)). S196 is subject to Phosphoserine. Residue K251 forms a Glycyl lysine isopeptide (Lys-Gly) (interchain with G-Cter in SUMO2) linkage. Disordered stretches follow at residues 414 to 477 (QAPW…SSSD) and 496 to 692 (VELS…RYYL). A compositionally biased stretch (low complexity) spans 434-444 (VGVSSLLNSSD). Residues 438 to 574 (SLLNSSDSSD…RSTSLPAPRD (137 aa)) form a sumoylation and localization to discrete nuclear foci region. The segment at 438 to 654 (SLLNSSDSSD…RSRTRDSSWS (217 aa)) is interaction with SUMO1. The segment covering 455 to 464 (TTSQIQGVQT) has biased composition (polar residues). The interaction with p53/TP53 stretch occupies residues 457 to 731 (SQIQGVQTND…RRTLSRAHYS (275 aa)). The segment at 457–879 (SQIQGVQTND…GKATDTSKHH (423 aa)) is interaction with TOP1. Positions 465-477 (NDDVNNDSDSSSD) are enriched in low complexity. S500 carries the phosphoserine modification. Residues 507 to 518 (PYEKVETVKTQE) are compositionally biased toward basic and acidic residues. Low complexity predominate over residues 522-535 (SYSSGDSDVSRASS). The span at 540 to 566 (LGKDEQMSKSHCDSDTRISSKKEEKRS) shows a compositional bias: basic and acidic residues. K561 participates in a covalent cross-link: Glycyl lysine isopeptide (Lys-Gly) (interchain with G-Cter in SUMO). S585 carries the post-translational modification Phosphoserine. Basic residues-rich tracts occupy residues 613 to 629 (RNHRKHGKKRLRNKRSR) and 637 to 647 (PRARKDKKRSR). Over residues 654 to 669 (SRRSQTLSLSSGSTSR) the composition is skewed to low complexity. A Glycyl lysine isopeptide (Lys-Gly) (interchain with G-Cter in SUMO2) cross-link involves residue K701. Disordered stretches follow at residues 713–934 (RDGY…PIQD) and 970–1033 (TVEN…CDVS). S718 carries the post-translational modification Phosphoserine; by PLK1. Residues 721–730 (RRRTLSRAHY) show a composition bias toward basic residues. The span at 731–747 (SRQSSSPEFRIQSFSER) shows a compositional bias: polar residues. The residue at position 734 (S734) is a Phosphoserine. The span at 770–780 (SVSSNRSRTTS) shows a compositional bias: low complexity. Over residues 815 to 837 (FTSKGKDSHYQKSKLDGSYKNES) the composition is skewed to basic and acidic residues. Glycyl lysine isopeptide (Lys-Gly) (interchain with G-Cter in SUMO2) cross-links involve residues K818 and K834. Residues 851–860 (KHKRRRRRTR) show a composition bias toward basic residues. An interaction with UBE2I region spans residues 851-914 (KHKRRRRRTR…ITIDSDSDGE (64 aa)). Residues S861 and S863 each carry the phosphoserine modification. Residues 877–894 (KHHKKKKKKHKKKHKKHH) show a composition bias toward basic residues. Phosphoserine occurs at positions 909, 911, 999, 1016, and 1025. Polar residues predominate over residues 992–1008 (TFASDLESQSSNVSIQA).

As to quaternary structure, interacts with TOP1. Interacts with the SUMO1 conjugating enzyme UBE2I. Interacts with SUMO1. Interacts with NKX3-1; polyubiquitinates NKX3-1 and induces its proteasomal degradation. Interacts with SIN3A; sumoylates SIN3A. Interacts with IKBKE; induced by DNA damage. Interacts with p53/TP53. Interacts with PARK7/DJ-1. Post-translationally, phosphorylation at Ser-99 regulates the E3 ubiquitin-protein ligase activity but not the SUMO1-protein ligase activity. Phosphorylation at Ser-718 increases the E3 ubiquitin-protein ligase activity versus the E3 SUMO1-protein ligase activity resulting in increased p53/TP53 ubiquitination and degradation. In terms of processing, sumoylated.

Its subcellular location is the nucleus. It localises to the PML body. The catalysed reaction is S-ubiquitinyl-[E2 ubiquitin-conjugating enzyme]-L-cysteine + [acceptor protein]-L-lysine = [E2 ubiquitin-conjugating enzyme]-L-cysteine + N(6)-ubiquitinyl-[acceptor protein]-L-lysine.. Its function is as follows. Functions as an E3 ubiquitin-protein ligase and as a E3 SUMO1-protein ligase. Probable tumor suppressor involved in cell growth, cell proliferation and apoptosis that regulates p53/TP53 stability through ubiquitin-dependent degradation. May regulate chromatin modification through sumoylation of several chromatin modification-associated proteins. May be involved in DNA-damage-induced cell death through IKBKE sumoylation. This is E3 ubiquitin-protein ligase Topors (Topors) from Mus musculus (Mouse).